A 142-amino-acid polypeptide reads, in one-letter code: MIRVMATGVFDILHLGHIHYLKESKKLGDELVVVVARDSTARNNGKIPIFDENSRLALISELKVVDRAILGHEGDMMKTVIEVKPDIITLGYDQKFDEAELQSKINKLGITVKIVRISKYDGQLNSSSSVRKKIMELIGERY.

ATP contacts are provided by residues 9-10 (VF), 14-17 (HLGH), Asp93, and Tyr120.

The protein belongs to the archaeal FAD synthase family. In terms of assembly, homodimer. Requires a divalent metal cation as cofactor.

The enzyme catalyses FMN + ATP + H(+) = FAD + diphosphate. Its pathway is cofactor biosynthesis; FAD biosynthesis; FAD from FMN: step 1/1. In terms of biological role, catalyzes the transfer of the AMP portion of ATP to flavin mononucleotide (FMN) to produce flavin adenine dinucleotide (FAD) coenzyme. This chain is FAD synthase (ribL), found in Thermoplasma volcanium (strain ATCC 51530 / DSM 4299 / JCM 9571 / NBRC 15438 / GSS1).